Reading from the N-terminus, the 258-residue chain is Coiled-coil domain-containing protein 127 (258 aa).

The stretch at 50 to 170 forms a coiled coil; that stretch reads KEIEKEKEAC…EEALAERQSI (121 aa).

This is Coiled-coil domain-containing protein 127 (CCDC127) from Sus scrofa (Pig).